A 501-amino-acid chain; its full sequence is Archaemetzincin-1 (501 aa).

His261 provides a ligand contact to Zn(2+). Glu262 acts as the Proton acceptor in catalysis. Zn(2+)-binding residues include His265, Cys272, Cys277, Cys296, and Cys299. Residues 349–370 are disordered; the sequence is DSGMGCESDTEPVTSPSEPVTP.

It belongs to the peptidase M54 family. The cofactor is Zn(2+).

Probable zinc metalloprotease. The protein is Archaemetzincin-1 (Amz1) of Rattus norvegicus (Rat).